Consider the following 469-residue polypeptide: 3-isopropylmalate dehydratase large subunit (469 aa).

The [4Fe-4S] cluster site is built by Cys350, Cys410, and Cys413.

This sequence belongs to the aconitase/IPM isomerase family. LeuC type 1 subfamily. In terms of assembly, heterodimer of LeuC and LeuD. [4Fe-4S] cluster serves as cofactor.

The catalysed reaction is (2R,3S)-3-isopropylmalate = (2S)-2-isopropylmalate. It functions in the pathway amino-acid biosynthesis; L-leucine biosynthesis; L-leucine from 3-methyl-2-oxobutanoate: step 2/4. Its function is as follows. Catalyzes the isomerization between 2-isopropylmalate and 3-isopropylmalate, via the formation of 2-isopropylmaleate. The chain is 3-isopropylmalate dehydratase large subunit from Allorhizobium ampelinum (strain ATCC BAA-846 / DSM 112012 / S4) (Agrobacterium vitis (strain S4)).